We begin with the raw amino-acid sequence, 146 residues long: VHLTAEEKSAVTALWGKVNVDEVGGEALGRLLVVYPWTQRFFDSFGDLSTPDAVMNNPKVKAHGKKVLGAFSDGLTHLDNLKGTFAQLSELHCDKLHVDPENFRLLGNVLVCVLAHHFGKEFTPQVQAAYQKVVAGVATALAHKYH.

An N-acetylvaline modification is found at valine 1. Residues 2 to 146 (HLTAEEKSAV…VATALAHKYH (145 aa)) form the Globin domain. Position 12 is a phosphothreonine (threonine 12). A Phosphoserine modification is found at serine 44. Lysine 59 carries the N6-acetyllysine modification. A heme b-binding site is contributed by histidine 63. Lysine 82 is subject to N6-acetyllysine. Histidine 92 serves as a coordination point for heme b. Cysteine 93 is modified (S-nitrosocysteine). Lysine 144 is subject to N6-acetyllysine.

The protein belongs to the globin family. In terms of assembly, heterotetramer of two alpha chains and two beta chains. As to expression, red blood cells.

Involved in oxygen transport from the lung to the various peripheral tissues. The protein is Hemoglobin subunit beta (HBB) of Cebus albifrons (White-fronted capuchin).